We begin with the raw amino-acid sequence, 800 residues long: Ion-translocating oxidoreductase complex subunit C (800 aa).

2 consecutive 4Fe-4S ferredoxin-type domains span residues 367–398 (DEFSVPQAEQPCIRCGACADVCPARLLPQQLY) and 408–437 (KARGYHLQECIECGACAYVCPSNIPLVQYY). The [4Fe-4S] cluster site is built by Cys378, Cys381, Cys384, Cys388, Cys417, Cys420, Cys423, and Cys427. 5 stretches are compositionally biased toward low complexity: residues 536–553 (GATPAPAATDSDAAAPAP), 571–583 (AKQAGATPAPAAT), 599–617 (AAIARAKAKQAGATPAPAA), 647–667 (AKQAGATPAPATTDSDAADPA), and 675–690 (AAIAAAIARAKAKQAA). Disordered regions lie at residues 536-558 (GATPAPAATDSDAAAPAPQDDPR), 571-631 (AKQA…QDDP), and 647-706 (AKQA…ENTD). The segment covering 693-705 (HATTEPVTVQENT) has biased composition (polar residues).

The protein belongs to the 4Fe4S bacterial-type ferredoxin family. RnfC subfamily. As to quaternary structure, the complex is composed of six subunits: RnfA, RnfB, RnfC, RnfD, RnfE and RnfG. It depends on [4Fe-4S] cluster as a cofactor.

It is found in the cell inner membrane. Its function is as follows. Part of a membrane-bound complex that couples electron transfer with translocation of ions across the membrane. The chain is Ion-translocating oxidoreductase complex subunit C from Edwardsiella ictaluri (strain 93-146).